The chain runs to 434 residues: MTVTDIASRTYNHSWRLDPIIRSLLDTDFYKLLMLQMIREDYSNQQVTFSVINRSRHVRLAEIIDEGELRAQLDHARTIRFTKKELIWLAGNTFYGKTHMFSADFIRWLAEFRLPEYELRKVEGQYELHFHGPWTHTTMWEIPALAILNELRSRAAIKGRGRFELDVLYARAKAKLWTKVERLRKLENLRLSDFGTRRRHGFLWQRWCVEAVKEGLGPSFIGTSNVLLAMDNDLEAIGTNAHELPMVAAGLAKDDEELRWAPYRILDQWRQTYGGNLLIALPDAFGTKAFLRDAPEWVADWTGFRPDSAPPIQAGEEIIAWWEKKGRNPRDKLLVFSDAMDVGSIEETYHHFTGRVRLSFGWGTNLTNDFVGCAPDGSFNLDPISLVCKVSSVDGHPAVKLSDNPEKATGLPSEIERYLRVFGDVGRVRKPVLV.

Phosphohistidine; by autocatalysis is present on H242.

The protein belongs to the NAPRTase family. Post-translationally, transiently phosphorylated on a His residue during the reaction cycle. Phosphorylation strongly increases the affinity for substrates and increases the rate of nicotinate D-ribonucleotide production. Dephosphorylation regenerates the low-affinity form of the enzyme, leading to product release.

The catalysed reaction is nicotinate + 5-phospho-alpha-D-ribose 1-diphosphate + ATP + H2O = nicotinate beta-D-ribonucleotide + ADP + phosphate + diphosphate. The protein operates within cofactor biosynthesis; NAD(+) biosynthesis; nicotinate D-ribonucleotide from nicotinate: step 1/1. Its function is as follows. Catalyzes the synthesis of beta-nicotinate D-ribonucleotide from nicotinate and 5-phospho-D-ribose 1-phosphate at the expense of ATP. The polypeptide is Nicotinate phosphoribosyltransferase (Bradyrhizobium diazoefficiens (strain JCM 10833 / BCRC 13528 / IAM 13628 / NBRC 14792 / USDA 110)).